A 97-amino-acid polypeptide reads, in one-letter code: UPF0235 protein APL_1380 (97 aa).

It belongs to the UPF0235 family.

The sequence is that of UPF0235 protein APL_1380 from Actinobacillus pleuropneumoniae serotype 5b (strain L20).